Reading from the N-terminus, the 475-residue chain is MAAGPLRGLAVAGGGESSESEDDGWEIGYLDRTAQKLKGPLPVEERQETFKKALTSGNISLVEELLDSGISVDTSFQYGWTSLMYAASVSNVELVRVLLDRGANASFDKDKQTVLITACSARGSEEKILKCIELLLSRNADPNVACRRLMTPIMYAARDGHPQVVALLVAHGAEVNTQDENGYTALTWAARQGHKNVVLKLLELGANKMIQTKDGKTPSEIAKRNKHLEIFNFLSLTLNPLEGKLHQLTKEESISKLLRTDSDKEKDHIFSSYTAFGDLEIFLHGLGLEHMTDLLKEREITLRHLLTMRKDELAKNGITSRDQQKIMAALKELEVEEIKFGELPEVAKLEISGDEFLNFLLKLNKQCGHLIKAVQNIITELPVNSHKIVLEWASPRNFTSVCEELVSNVEDLSEEVCKLKDLIQKLQNERENDPTHIPLMEEVSTWNTRILKRTAITVCGFGVLLFICKLTFQKK.

Residues 1–24 (MAAGPLRGLAVAGGGESSESEDDG) are disordered. A phosphoserine mark is found at Ser17, Ser18, and Ser20. 6 ANK repeats span residues 45–74 (ERQETFKKALTSGNISLVEELLDSGISVDT), 78–107 (YGWTSLMYAASVSNVELVRVLLDRGANASF), 110–144 (DKQTVLITACSARGSEEKILKCIELLLSRNADPNV), 148–177 (RLMTPIMYAARDGHPQVVALLVAHGAEVNT), 181–210 (NGYTALTWAARQGHKNVVLKLLELGANKMI), and 214–243 (DGKTPSEIAKRNKHLEIFNFLSLTLNPLEG). In terms of domain architecture, SAM spans 272–334 (SYTAFGDLEI…KIMAALKELE (63 aa)).

Interacts with DDX4, PIWIL1, RANBP9 and TDRD1.

The protein resides in the cytoplasm. Its function is as follows. Plays a central role during spermatogenesis by repressing transposable elements and preventing their mobilization, which is essential for the germline integrity. Acts via the piRNA metabolic process, which mediates the repression of transposable elements during meiosis by forming complexes composed of piRNAs and Piwi proteins and governs the methylation and subsequent repression of transposons. Its association with pi-bodies suggests a participation in the primary piRNAs metabolic process. Required prior to the pachytene stage to facilitate the production of multiple types of piRNAs, including those associated with repeats involved in the regulation of retrotransposons. May act by mediating protein-protein interactions during germ cell maturation. The chain is Ankyrin repeat, SAM and basic leucine zipper domain-containing protein 1 (ASZ1) from Ovis aries (Sheep).